The chain runs to 311 residues: Ribosomal RNA small subunit methyltransferase H (311 aa).

S-adenosyl-L-methionine is bound by residues 35–37, Asp55, Phe80, Asp102, and Gln109; that span reads GGH.

The protein belongs to the methyltransferase superfamily. RsmH family.

It localises to the cytoplasm. It catalyses the reaction cytidine(1402) in 16S rRNA + S-adenosyl-L-methionine = N(4)-methylcytidine(1402) in 16S rRNA + S-adenosyl-L-homocysteine + H(+). In terms of biological role, specifically methylates the N4 position of cytidine in position 1402 (C1402) of 16S rRNA. The sequence is that of Ribosomal RNA small subunit methyltransferase H from Pseudoalteromonas atlantica (strain T6c / ATCC BAA-1087).